Consider the following 165-residue polypeptide: 3-isopropylmalate dehydratase small subunit (165 aa).

Belongs to the LeuD family. LeuD type 2 subfamily. Heterodimer of LeuC and LeuD.

The catalysed reaction is (2R,3S)-3-isopropylmalate = (2S)-2-isopropylmalate. It functions in the pathway amino-acid biosynthesis; L-leucine biosynthesis; L-leucine from 3-methyl-2-oxobutanoate: step 2/4. Its function is as follows. Catalyzes the isomerization between 2-isopropylmalate and 3-isopropylmalate, via the formation of 2-isopropylmaleate. The polypeptide is 3-isopropylmalate dehydratase small subunit (Lachnoclostridium phytofermentans (strain ATCC 700394 / DSM 18823 / ISDg) (Clostridium phytofermentans)).